The primary structure comprises 143 residues: Small ribosomal subunit protein uS11c (143 aa).

The protein belongs to the universal ribosomal protein uS11 family. Part of the 30S ribosomal subunit.

It is found in the plastid. It localises to the chloroplast. This chain is Small ribosomal subunit protein uS11c, found in Hordeum vulgare (Barley).